A 422-amino-acid chain; its full sequence is COUP transcription factor 1 (422 aa).

The interval 1–80 (MAMVVSSWRD…QGPPGSGQSQ (80 aa)) is disordered. Over residues 39-66 (EQQQAGSGAPHTPQTPGQPGAPATPGTQ) the composition is skewed to low complexity. Residues 82–157 (HIECVVCGDK…VGMRREAVQR (76 aa)) constitute a DNA-binding region (nuclear receptor). 2 consecutive NR C4-type zinc fingers follow at residues 85–105 (CVVC…CEGC) and 121–145 (CRAN…LKKC). Positions 183–409 (YLSGYISLLL…TLIRDMLLSG (227 aa)) constitute an NR LBD domain. The tract at residues 343-422 (LQEKSQCALE…NWPYMSIQCS (80 aa)) is important for dimerization.

Belongs to the nuclear hormone receptor family. NR2 subfamily. As to quaternary structure, binds DNA as dimer; homodimer and probable heterodimer with NR2F6. Interacts with GTF2B; this interaction is direct. Interacts with COPS2.

It localises to the nucleus. In terms of biological role, coup (chicken ovalbumin upstream promoter) transcription factor binds to the ovalbumin promoter and, in conjunction with another protein (S300-II) stimulates initiation of transcription. Binds to both direct repeats and palindromes of the 5'-AGGTCA-3' motif. Represses transcriptional activity of LHCG. This chain is COUP transcription factor 1 (Nr2f1), found in Mus musculus (Mouse).